A 453-amino-acid polypeptide reads, in one-letter code: Tubulin delta chain (453 aa).

143–149 (AGGTGSG) lines the GTP pocket.

Belongs to the tubulin family. In terms of assembly, found in a complex with TEDC1, TEDC2, TUBE1 and TUBD1.

It is found in the nucleus. The protein localises to the cytoplasm. Its subcellular location is the cytoskeleton. The protein resides in the microtubule organizing center. It localises to the centrosome. It is found in the centriole. The protein localises to the cell projection. Its subcellular location is the cilium. In terms of biological role, acts as a positive regulator of hedgehog signaling and regulates ciliary function. The chain is Tubulin delta chain (TUBD1) from Canis lupus familiaris (Dog).